Reading from the N-terminus, the 321-residue chain is Transcriptional activator protein Pur-alpha (321 aa).

Residues Met-1–Gln-54 form a disordered region. An N-acetylalanine modification is found at Ala-2. The span at Glu-9–Gly-51 shows a compositional bias: gly residues. Phosphoserine is present on Ser-181. Over residues Leu-294–Gln-313 the composition is skewed to low complexity. Residues Leu-294–Asp-321 form a disordered region.

Belongs to the PUR DNA-binding protein family. Homodimer, heterodimer with PURB and heterotrimer with PURB and YBX1/Y-box protein 1. Interacts with FMR1; this interaction occurs in association with polyribosome.

The protein resides in the nucleus. This is a probable transcription activator that specifically binds the purine-rich single strand of the PUR element located upstream of the c-Myc gene. May play a role in the initiation of DNA replication and in recombination. This chain is Transcriptional activator protein Pur-alpha (Pura), found in Mus musculus (Mouse).